The sequence spans 398 residues: 1-deoxy-D-xylulose 5-phosphate reductoisomerase (398 aa).

Residues T13, G14, S15, I16, R40, and N127 each contribute to the NADPH site. K128 contributes to the 1-deoxy-D-xylulose 5-phosphate binding site. E129 lines the NADPH pocket. Position 153 (D153) interacts with Mn(2+). S154, E155, S188, and H211 together coordinate 1-deoxy-D-xylulose 5-phosphate. E155 is a binding site for Mn(2+). Residue G217 coordinates NADPH. 1-deoxy-D-xylulose 5-phosphate-binding residues include S224, N229, K230, and E233. E233 contacts Mn(2+).

This sequence belongs to the DXR family. The cofactor is Mg(2+). Mn(2+) is required as a cofactor.

It catalyses the reaction 2-C-methyl-D-erythritol 4-phosphate + NADP(+) = 1-deoxy-D-xylulose 5-phosphate + NADPH + H(+). It participates in isoprenoid biosynthesis; isopentenyl diphosphate biosynthesis via DXP pathway; isopentenyl diphosphate from 1-deoxy-D-xylulose 5-phosphate: step 1/6. In terms of biological role, catalyzes the NADPH-dependent rearrangement and reduction of 1-deoxy-D-xylulose-5-phosphate (DXP) to 2-C-methyl-D-erythritol 4-phosphate (MEP). The sequence is that of 1-deoxy-D-xylulose 5-phosphate reductoisomerase from Cellvibrio japonicus (strain Ueda107) (Pseudomonas fluorescens subsp. cellulosa).